The chain runs to 166 residues: Phospholipase A2 inhibitor A4/A5 (166 aa).

The first 19 residues, 1–19 (MRLILLSGLLLLGTFLVNG), serve as a signal peptide directing secretion. The 116-residue stretch at 46 to 161 (LFHAFLTVHK…CDDNLLVVCE (116 aa)) folds into the C-type lectin domain. Intrachain disulfides connect Cys-83-Cys-160 and Cys-138-Cys-152. N-linked (GlcNAc...) asparagine glycosylation is present at Asn-122.

It belongs to the alpha-type phospholipase A2 inhibitor family. Homotrimer; non-covalently linked. In terms of tissue distribution, expressed by the liver.

It localises to the secreted. This phospholipase A2 inhibitor binds directly phospholipase A2 in the presence or absence of calcium. The protein is Phospholipase A2 inhibitor A4/A5 of Crotalus durissus terrificus (South American rattlesnake).